A 205-amino-acid chain; its full sequence is Phosphoenolpyruvate guanylyltransferase (205 aa).

Residues T138, G154, and S157 each contribute to the phosphoenolpyruvate site.

This sequence belongs to the CofC family.

The enzyme catalyses phosphoenolpyruvate + GTP + H(+) = enolpyruvoyl-2-diphospho-5'-guanosine + diphosphate. It functions in the pathway cofactor biosynthesis; coenzyme F420 biosynthesis. In terms of biological role, guanylyltransferase that catalyzes the activation of phosphoenolpyruvate (PEP) as enolpyruvoyl-2-diphospho-5'-guanosine, via the condensation of PEP with GTP. It is involved in the biosynthesis of coenzyme F420, a hydride carrier cofactor. This Chloroflexus aurantiacus (strain ATCC 29364 / DSM 637 / Y-400-fl) protein is Phosphoenolpyruvate guanylyltransferase.